The chain runs to 140 residues: Putative pre-16S rRNA nuclease (140 aa).

The protein belongs to the YqgF nuclease family.

The protein resides in the cytoplasm. Functionally, could be a nuclease involved in processing of the 5'-end of pre-16S rRNA. This chain is Putative pre-16S rRNA nuclease, found in Moorella thermoacetica (strain ATCC 39073 / JCM 9320).